Here is a 562-residue protein sequence, read N- to C-terminus: Sensor histidine kinase MtrB (562 aa).

2 helical membrane-spanning segments follow: residues 42 to 62 and 213 to 233; these read VVAL…FVLT and GTMA…ALLV. The 53-residue stretch at 235–287 folds into the HAMP domain; that stretch reads RQVVVPVRSASRIAERFAEGHLSERMPVRGEDDMARLAVSFNDMAESLSRQIT. Residues 302–519 enclose the Histidine kinase domain; the sequence is DVSHELRTPL…CFRLTLPLVR (218 aa). Residues 526 to 562 are disordered; the sequence is SPLPMKPILQPSPQASTAGQQHGTQRQRLREHAERSR. Residues 536–551 are compositionally biased toward polar residues; the sequence is PSPQASTAGQQHGTQR. Basic and acidic residues predominate over residues 553-562; that stretch reads RLREHAERSR.

It is found in the cell membrane. The enzyme catalyses ATP + protein L-histidine = ADP + protein N-phospho-L-histidine.. In terms of biological role, member of the two-component regulatory system MtrA/MtrB. Seems to function as a membrane-associated protein kinase that phosphorylates MtrA in response to environmental signals. This chain is Sensor histidine kinase MtrB (mtrB), found in Mycobacterium leprae (strain TN).